A 233-amino-acid chain; its full sequence is 7-cyano-7-deazaguanine synthase (233 aa).

Position 17-27 (17-27) interacts with ATP; it reads LSGGLDSMVCA. 4 residues coordinate Zn(2+): Cys196, Cys206, Cys209, and Cys212.

It belongs to the QueC family. The cofactor is Zn(2+).

It carries out the reaction 7-carboxy-7-deazaguanine + NH4(+) + ATP = 7-cyano-7-deazaguanine + ADP + phosphate + H2O + H(+). It functions in the pathway purine metabolism; 7-cyano-7-deazaguanine biosynthesis. Functionally, catalyzes the ATP-dependent conversion of 7-carboxy-7-deazaguanine (CDG) to 7-cyano-7-deazaguanine (preQ(0)). The protein is 7-cyano-7-deazaguanine synthase of Novosphingobium aromaticivorans (strain ATCC 700278 / DSM 12444 / CCUG 56034 / CIP 105152 / NBRC 16084 / F199).